A 418-amino-acid chain; its full sequence is Beta-arrestin-1 (418 aa).

Residues 1–163 (MGDKGTRVFK…LEEKIHKRNS (163 aa)) form an interaction with SRC region. The segment at 45 to 86 (PEYLKERRVYVTLTCAFRYGREDLDVLGLTFRKDLFVANVQS) is interaction with CHRM2. Residue Tyr47 is modified to Phosphotyrosine. 4 residues coordinate 1D-myo-inositol hexakisphosphate: Lys250, Met255, Lys324, and Lys326. Residues 318-418 (IVSYKVKVKL…GTGSPHLNNR (101 aa)) form an interaction with TRAF6 region. Disordered stretches follow at residues 353–375 (HPKPKEEPPHREVPESETPVDTN) and 397–418 (KGMKDDKDEEDDGTGSPHLNNR). Residues 355–366 (KPKEEPPHREVP) show a composition bias toward basic and acidic residues. Position 412 is a phosphoserine (Ser412).

This sequence belongs to the arrestin family. In terms of assembly, monomer. Homodimer. Homooligomer; the self-association is mediated by InsP6-binding. Heterooligomer with ARRB2; the association is mediated by InsP6-binding. Interacts with ADRB2 (phosphorylated). Interacts with CHRM2 (phosphorylated). Interacts with LHCGR. Interacts with CYTH2 and CASR. Interacts with AP2B1 (dephosphorylated); phosphorylation of AP2B1 disrupts the interaction. Interacts (dephosphorylated at Ser-412) with CLTC. Interacts with CCR2 and GRK2. Interacts with CRR5. Interacts with PTAFR (phosphorylated on serine residues). Interacts with CLTC and MAP2K3. Interacts with CREB1. Interacts with TRAF6. Interacts with IGF1R and MDM2. Interacts with C5AR1. Interacts with PDE4D. Interacts with SRC (via the SH3 domain and the protein kinase domain); the interaction is independent of the phosphorylation state of SRC C-terminus. Interacts with TACR1. Interacts with RAF1. Interacts with DVL1; the interaction is enhanced by phosphorylation of DVL1. Interacts with DVL2; the interaction is enhanced by phosphorylation of DVL2. Interacts with IGF1R. Interacts with CHUK, IKBKB and MAP3K14. Associates with MAP kinase p38. Part of a MAPK signaling complex consisting of TACR1, ARRB1, SRC, MAPK1 (activated) and MAPK3 (activated). Part of a MAPK signaling complex consisting of F2RL1, ARRB1, RAF1, MAPK1 (activated) and MAPK3 (activated). Interacts with GPR143. Interacts with MAP2K4/MKK4. Interacts with HCK and CXCR1 (phosphorylated). Interacts with ACKR3 and ACKR4. Interacts with ARRDC1; the interaction is direct. Interacts with GPR61, GPR62 and GPR135. Post-translationally, constitutively phosphorylated at in the cytoplasm. At the plasma membrane, is rapidly dephosphorylated, a process that is required for clathrin binding and ADRB2 endocytosis but not for ADRB2 binding and desensitization. Once internalized, is rephosphorylated. In terms of processing, the ubiquitination status appears to regulate the formation and trafficking of beta-arrestin-GPCR complexes and signaling. Ubiquitination appears to occur GPCR-specific. Ubiquitinated by MDM2; the ubiquitination is required for rapid internalization of ADRB2. Deubiquitinated by USP33; the deubiquitination leads to a dissociation of the beta-arrestin-GPCR complex. Stimulation of a class A GPCR, such as ADRB2, induces transient ubiquitination and subsequently promotes association with USP33.

It localises to the cytoplasm. The protein resides in the nucleus. The protein localises to the cell membrane. It is found in the membrane. Its subcellular location is the clathrin-coated pit. It localises to the cell projection. The protein resides in the pseudopodium. The protein localises to the cytoplasmic vesicle. Functions in regulating agonist-mediated G-protein coupled receptor (GPCR) signaling by mediating both receptor desensitization and resensitization processes. During homologous desensitization, beta-arrestins bind to the GPRK-phosphorylated receptor and sterically preclude its coupling to the cognate G-protein; the binding appears to require additional receptor determinants exposed only in the active receptor conformation. The beta-arrestins target many receptors for internalization by acting as endocytic adapters (CLASPs, clathrin-associated sorting proteins) and recruiting the GPRCs to the adapter protein 2 complex 2 (AP-2) in clathrin-coated pits (CCPs). However, the extent of beta-arrestin involvement appears to vary significantly depending on the receptor, agonist and cell type. Internalized arrestin-receptor complexes traffic to intracellular endosomes, where they remain uncoupled from G-proteins. Two different modes of arrestin-mediated internalization occur. Class A receptors, like ADRB2, OPRM1, ENDRA, D1AR and ADRA1B dissociate from beta-arrestin at or near the plasma membrane and undergo rapid recycling. Class B receptors, like AVPR2, AGTR1, NTSR1, TRHR and TACR1 internalize as a complex with arrestin and traffic with it to endosomal vesicles, presumably as desensitized receptors, for extended periods of time. Receptor resensitization then requires that receptor-bound arrestin is removed so that the receptor can be dephosphorylated and returned to the plasma membrane. Involved in internalization of P2RY4 and UTP-stimulated internalization of P2RY2. Involved in phosphorylation-dependent internalization of OPRD1 ands subsequent recycling. Involved in the degradation of cAMP by recruiting cAMP phosphodiesterases to ligand-activated receptors. Beta-arrestins function as multivalent adapter proteins that can switch the GPCR from a G-protein signaling mode that transmits short-lived signals from the plasma membrane via small molecule second messengers and ion channels to a beta-arrestin signaling mode that transmits a distinct set of signals that are initiated as the receptor internalizes and transits the intracellular compartment. Acts as a signaling scaffold for MAPK pathways such as MAPK1/3 (ERK1/2). ERK1/2 activated by the beta-arrestin scaffold is largely excluded from the nucleus and confined to cytoplasmic locations such as endocytic vesicles, also called beta-arrestin signalosomes. Recruits c-Src/SRC to ADRB2 resulting in ERK activation. GPCRs for which the beta-arrestin-mediated signaling relies on both ARRB1 and ARRB2 (codependent regulation) include ADRB2, F2RL1 and PTH1R. For some GPCRs the beta-arrestin-mediated signaling relies on either ARRB1 or ARRB2 and is inhibited by the other respective beta-arrestin form (reciprocal regulation). Inhibits ERK1/2 signaling in AGTR1- and AVPR2-mediated activation (reciprocal regulation). Is required for SP-stimulated endocytosis of NK1R and recruits c-Src/SRC to internalized NK1R resulting in ERK1/2 activation, which is required for the antiapoptotic effects of SP. Is involved in proteinase-activated F2RL1-mediated ERK activity. Acts as a signaling scaffold for the AKT1 pathway. Is involved in alpha-thrombin-stimulated AKT1 signaling. Is involved in IGF1-stimulated AKT1 signaling leading to increased protection from apoptosis. Involved in activation of the p38 MAPK signaling pathway and in actin bundle formation. Involved in F2RL1-mediated cytoskeletal rearrangement and chemotaxis. Involved in AGTR1-mediated stress fiber formation by acting together with GNAQ to activate RHOA. Appears to function as signaling scaffold involved in regulation of MIP-1-beta-stimulated CCR5-dependent chemotaxis. Involved in attenuation of NF-kappa-B-dependent transcription in response to GPCR or cytokine stimulation by interacting with and stabilizing CHUK. May serve as nuclear messenger for GPCRs. Involved in OPRD1-stimulated transcriptional regulation by translocating to CDKN1B and FOS promoter regions and recruiting EP300 resulting in acetylation of histone H4. Involved in regulation of LEF1 transcriptional activity via interaction with DVL1 and/or DVL2 Also involved in regulation of receptors other than GPCRs. Involved in Toll-like receptor and IL-1 receptor signaling through the interaction with TRAF6 which prevents TRAF6 autoubiquitination and oligomerization required for activation of NF-kappa-B and JUN. Involved in IL8-mediated granule release in neutrophils. Binds phosphoinositides. Binds inositolhexakisphosphate (InsP6). Required for atypical chemokine receptor ACKR2-induced RAC1-LIMK1-PAK1-dependent phosphorylation of cofilin (CFL1) and for the up-regulation of ACKR2 from endosomal compartment to cell membrane, increasing its efficiency in chemokine uptake and degradation. Involved in the internalization of the atypical chemokine receptor ACKR3. Negatively regulates the NOTCH signaling pathway by mediating the ubiquitination and degradation of NOTCH1 by ITCH. Participates in the recruitment of the ubiquitin-protein ligase to the receptor. This chain is Beta-arrestin-1 (Arrb1), found in Mus musculus (Mouse).